We begin with the raw amino-acid sequence, 847 residues long: Ras GTPase-activating protein 2 (847 aa).

The span at 1 to 21 (MAAAAPAAAASPEAPAVSGSA) shows a compositional bias: low complexity. The interval 1–31 (MAAAAPAAAASPEAPAVSGSADPETGDEDSR) is disordered. Ala2 is subject to N-acetylalanine. C2 domains follow at residues 19–137 (GSAD…ETWF) and 148–288 (VQGK…QAWY). In terms of domain architecture, Ras-GAP spans 371 to 588 (NKLVPFITAV…TDVKKFLDEI (218 aa)). Ser554 is subject to Phosphoserine. Residues 603-704 (VHLKEGEMYK…WIDVLCRVSR (102 aa)) form the PH domain. Residues 706–742 (NHNRLSSFHPSAYLNGNWLCCQETSESTPGCKPCTAG) form a Btk-type zinc finger. Zn(2+)-binding residues include His714, Cys725, Cys726, and Cys736. The tract at residues 819–847 (DEPHEKYRKKRSSSAKYGSKENPIVGKIS) is disordered.

It localises to the cell membrane. In terms of biological role, inhibitory regulator of the Ras-cyclic AMP pathway. Binds inositol tetrakisphosphate (IP4) and phospholipids. The polypeptide is Ras GTPase-activating protein 2 (Rasa2) (Mus musculus (Mouse)).